A 133-amino-acid polypeptide reads, in one-letter code: ATP synthase epsilon chain, chloroplastic (133 aa).

It belongs to the ATPase epsilon chain family. As to quaternary structure, F-type ATPases have 2 components, CF(1) - the catalytic core - and CF(0) - the membrane proton channel. CF(1) has five subunits: alpha(3), beta(3), gamma(1), delta(1), epsilon(1). CF(0) has three main subunits: a, b and c.

The protein resides in the plastid. It is found in the chloroplast thylakoid membrane. Its function is as follows. Produces ATP from ADP in the presence of a proton gradient across the membrane. This is ATP synthase epsilon chain, chloroplastic from Nephroselmis olivacea (Green alga).